The primary structure comprises 420 residues: 4-hydroxy-3-methylbut-2-en-1-yl diphosphate synthase (flavodoxin) (420 aa).

Positions 307, 310, 353, and 360 each coordinate [4Fe-4S] cluster.

The protein belongs to the IspG family. [4Fe-4S] cluster serves as cofactor.

It catalyses the reaction (2E)-4-hydroxy-3-methylbut-2-enyl diphosphate + oxidized [flavodoxin] + H2O + 2 H(+) = 2-C-methyl-D-erythritol 2,4-cyclic diphosphate + reduced [flavodoxin]. It participates in isoprenoid biosynthesis; isopentenyl diphosphate biosynthesis via DXP pathway; isopentenyl diphosphate from 1-deoxy-D-xylulose 5-phosphate: step 5/6. Converts 2C-methyl-D-erythritol 2,4-cyclodiphosphate (ME-2,4cPP) into 1-hydroxy-2-methyl-2-(E)-butenyl 4-diphosphate. The polypeptide is 4-hydroxy-3-methylbut-2-en-1-yl diphosphate synthase (flavodoxin) (Brucella melitensis biotype 2 (strain ATCC 23457)).